A 269-amino-acid chain; its full sequence is Troponin I (269 aa).

A disordered region spans residues 1-104; sequence MADDEKKAAA…AKKGFMTPER (104 aa). Position 2 is an N-acetylalanine (A2). Low complexity predominate over residues 9 to 50; it reads AAPAAAPAAAAKPAAPAAAPAANGKAAPAANGKAAPAAAAAP. A compositionally biased stretch (basic and acidic residues) spans 56-91; that stretch reads DPNDPKVKAEEAKKAKQAEIERKRAEVRKRMEEASK. The tract at residues 162 to 171 is troponin T-interaction; the sequence is ERMYICEGQK. Residues 189–202 are actin-binding; that stretch reads NAQVNDLRGKFVKP. An N6,N6,N6-trimethyllysine mark is found at K201 and K205. The tract at residues 239-269 is disordered; it reads TLEEEEKEKKPDWSKGKPGDAKVKEEVEAEA.

Belongs to the troponin I family. In terms of assembly, binds to actin and tropomyosin. In terms of tissue distribution, all isoforms are expressed in somatic muscle. Isoforms containing exon 6a1 (isoforms 1 and 2) are expressed in all muscles but highest expression is in abdominal muscle and splanchnic muscle of the gut. Isoforms containing exon 6b1 (isoforms 5, 6, 9 and 10) are highly expressed in the tergal depressor of trochanter (TDT) muscle.

Its function is as follows. Troponin I is the ATPase inhibitory subunit of troponin in the thin filament regulatory complex. Involved in the development and maintenance of muscle and nervous system. May also be involved in the cytoskeletal apparatus. The polypeptide is Troponin I (wupA) (Drosophila melanogaster (Fruit fly)).